A 206-amino-acid polypeptide reads, in one-letter code: Large ribosomal subunit protein uL4 (206 aa).

Residues 49–79 form a disordered region; that stretch reads KVKTRSEISRTTKKMYKQKGTGNARHGAASA.

Belongs to the universal ribosomal protein uL4 family. As to quaternary structure, part of the 50S ribosomal subunit.

In terms of biological role, one of the primary rRNA binding proteins, this protein initially binds near the 5'-end of the 23S rRNA. It is important during the early stages of 50S assembly. It makes multiple contacts with different domains of the 23S rRNA in the assembled 50S subunit and ribosome. Forms part of the polypeptide exit tunnel. In Methylobacterium sp. (strain 4-46), this protein is Large ribosomal subunit protein uL4.